A 480-amino-acid polypeptide reads, in one-letter code: Glutamate--tRNA ligase (480 aa).

A 'HIGH' region motif is present at residues 21-31 (PSPTGYLHVGG). Zn(2+) contacts are provided by cysteine 110, cysteine 112, cysteine 137, and histidine 139. Residues 248-252 (KLSKR) carry the 'KMSKS' region motif. Lysine 251 contributes to the ATP binding site.

Belongs to the class-I aminoacyl-tRNA synthetase family. Glutamate--tRNA ligase type 1 subfamily. In terms of assembly, monomer. Zn(2+) serves as cofactor.

Its subcellular location is the cytoplasm. It catalyses the reaction tRNA(Glu) + L-glutamate + ATP = L-glutamyl-tRNA(Glu) + AMP + diphosphate. Its function is as follows. Catalyzes the attachment of glutamate to tRNA(Glu) in a two-step reaction: glutamate is first activated by ATP to form Glu-AMP and then transferred to the acceptor end of tRNA(Glu). This chain is Glutamate--tRNA ligase, found in Histophilus somni (strain 2336) (Haemophilus somnus).